The primary structure comprises 278 residues: Large ribosomal subunit protein uL2 (278 aa).

Residues 222–264 (RGVAMNPVDHPHGGGEGRTSGGRNPVTPWGVPTKGKKTRSNKR) form a disordered region.

It belongs to the universal ribosomal protein uL2 family. As to quaternary structure, part of the 50S ribosomal subunit. Forms a bridge to the 30S subunit in the 70S ribosome.

In terms of biological role, one of the primary rRNA binding proteins. Required for association of the 30S and 50S subunits to form the 70S ribosome, for tRNA binding and peptide bond formation. It has been suggested to have peptidyltransferase activity; this is somewhat controversial. Makes several contacts with the 16S rRNA in the 70S ribosome. The chain is Large ribosomal subunit protein uL2 from Methylobacterium radiotolerans (strain ATCC 27329 / DSM 1819 / JCM 2831 / NBRC 15690 / NCIMB 10815 / 0-1).